We begin with the raw amino-acid sequence, 552 residues long: MVAAPISTVKLTDANLHTRFHSSSSSTPSTLSLPLSLHFHFSSHSKRFSSIRCQSVNGEKRKQSSRNVFDNASNLLTSLLSGANLGSMPIAEGAVTDLFDRPLFFSLYDWFLEHGSVYKLAFGPKAFVVVSDPIVARHILRENAFSYDKGVLADILEPIMGKGLIPADLETWKQRRRVIAPGFHTSYLEAMVQLFTSCSERTVLKVNELLEGEGRDGQKSVELDLEAEFSNLALEIIGLGVFNYDFGSVTNESPVIKAVYGTLFEAEHRSTFYIPYWKFPLARWIVPRQRKFQDDLKVINTCLDGLIRNAKESRQETDVEKLQQRDYSNLKDASLLRFLVDMRGVDVDDRQLRDDLMTMLIAGHETTAAVLTWAVFLLAQNPDKMKKAQAEVDLVLGMGKPTFELLKKLEYIRLIVVETLRLYPQPPLLIRRSLKPDVLPGGHKGDKDGYTIPAGTDVFISVYNLHRSPYFWDRPNDFEPERFLVQNNNEEVEGWAGFDPSRSPGALYPNEIISDFAFLPFGGGPRKCVGDQFALMESTVALVCCYRISMWN.

A chloroplast-targeting transit peptide spans 1–52 (MVAAPISTVKLTDANLHTRFHSSSSSTPSTLSLPLSLHFHFSSHSKRFSSIR). Heme is bound at residue cysteine 528.

The protein belongs to the cytochrome P450 family. Requires heme as cofactor.

Its subcellular location is the plastid. It localises to the chloroplast membrane. This chain is Cytochrome P450 97B1, chloroplastic (CYP97B1), found in Pisum sativum (Garden pea).